Reading from the N-terminus, the 451-residue chain is tRNA modification GTPase MnmE (451 aa).

(6S)-5-formyl-5,6,7,8-tetrahydrofolate contacts are provided by arginine 25, glutamate 82, and lysine 121. One can recognise a TrmE-type G domain in the interval 217-374 (GMSVVILGRP…LKQHLKTEMG (158 aa)). Asparagine 227 provides a ligand contact to K(+). Residues 227 to 232 (NAGKSS), 246 to 252 (TDIAGTT), and 271 to 274 (DTAG) each bind GTP. Serine 231 contacts Mg(2+). The K(+) site is built by threonine 246, isoleucine 248, and threonine 251. Mg(2+) is bound at residue threonine 252. (6S)-5-formyl-5,6,7,8-tetrahydrofolate is bound at residue lysine 451.

This sequence belongs to the TRAFAC class TrmE-Era-EngA-EngB-Septin-like GTPase superfamily. TrmE GTPase family. In terms of assembly, homodimer. Heterotetramer of two MnmE and two MnmG subunits. K(+) is required as a cofactor.

The protein resides in the cytoplasm. Its function is as follows. Exhibits a very high intrinsic GTPase hydrolysis rate. Involved in the addition of a carboxymethylaminomethyl (cmnm) group at the wobble position (U34) of certain tRNAs, forming tRNA-cmnm(5)s(2)U34. The sequence is that of tRNA modification GTPase MnmE from Hydrogenovibrio crunogenus (strain DSM 25203 / XCL-2) (Thiomicrospira crunogena).